The sequence spans 203 residues: Urease accessory protein UreG (203 aa).

Residue 14-21 (GPVGSGKT) coordinates GTP.

Belongs to the SIMIBI class G3E GTPase family. UreG subfamily. Homodimer. UreD, UreF and UreG form a complex that acts as a GTP-hydrolysis-dependent molecular chaperone, activating the urease apoprotein by helping to assemble the nickel containing metallocenter of UreC. The UreE protein probably delivers the nickel.

The protein resides in the cytoplasm. Its function is as follows. Facilitates the functional incorporation of the urease nickel metallocenter. This process requires GTP hydrolysis, probably effectuated by UreG. The chain is Urease accessory protein UreG from Sinorhizobium medicae (strain WSM419) (Ensifer medicae).